A 359-amino-acid chain; its full sequence is 3-dehydroquinate synthase (359 aa).

Residues 71 to 76 (DGEQYK), 105 to 109 (GVIGD), 129 to 130 (TT), Lys142, Lys151, and 169 to 172 (CLKT) each bind NAD(+). Zn(2+) contacts are provided by Glu184, His247, and His264.

It belongs to the sugar phosphate cyclases superfamily. Dehydroquinate synthase family. The cofactor is Co(2+). Zn(2+) is required as a cofactor. It depends on NAD(+) as a cofactor.

It is found in the cytoplasm. The enzyme catalyses 7-phospho-2-dehydro-3-deoxy-D-arabino-heptonate = 3-dehydroquinate + phosphate. Its pathway is metabolic intermediate biosynthesis; chorismate biosynthesis; chorismate from D-erythrose 4-phosphate and phosphoenolpyruvate: step 2/7. Its function is as follows. Catalyzes the conversion of 3-deoxy-D-arabino-heptulosonate 7-phosphate (DAHP) to dehydroquinate (DHQ). The sequence is that of 3-dehydroquinate synthase from Shewanella amazonensis (strain ATCC BAA-1098 / SB2B).